The following is a 732-amino-acid chain: X-ray repair cross-complementing protein 5 (732 aa).

The VWFA domain maps to 9-161 (AVVLCVDVGV…CNLKKSGISL (153 aa)). Positions 138 to 165 (LSSPFSQDQLDVIICNLKKSGISLQFFL) are leucine-zipper. A Glycyl lysine isopeptide (Lys-Gly) (interchain with G-Cter in SUMO2) cross-link involves residue lysine 195. Positions 253–453 (IGPNLSIKIV…CTPTEAQLSA (201 aa)) constitute a Ku domain. Position 258 is a phosphoserine (serine 258). Lysine 265 carries the post-translational modification N6-acetyllysine. Residue serine 318 is modified to Phosphoserine. Lysine 332 bears the N6-acetyllysine mark. Residues lysine 532 and lysine 534 each participate in a glycyl lysine isopeptide (Lys-Gly) (interchain with G-Cter in SUMO2) cross-link. At threonine 535 the chain carries Phosphothreonine. Residues lysine 567 and lysine 569 each participate in a glycyl lysine isopeptide (Lys-Gly) (interchain with G-Cter in SUMO2) cross-link. Phosphoserine; by PRKDC occurs at positions 578, 580, and 581. N6-acetyllysine is present on lysine 666. Glycyl lysine isopeptide (Lys-Gly) (interchain with G-Cter in SUMO2) cross-links involve residues lysine 670 and lysine 689. Residues 708–732 (PKDKAKEDTTGPEEAGDVDDLLDMI) form a disordered region. Position 716 is a phosphothreonine; by PRKDC (threonine 716). The segment covering 717 to 732 (TGPEEAGDVDDLLDMI) has biased composition (acidic residues). The short motif at 720-728 (EEAGDVDDL) is the EEXXXDL motif element.

This sequence belongs to the ku80 family. As to quaternary structure, heterodimer composed of XRCC5/Ku80 and XRCC6/Ku70. Component of the core long-range non-homologous end joining (NHEJ) complex (also named DNA-PK complex) composed of PRKDC, LIG4, XRCC4, XRCC6/Ku70, XRCC5/Ku86 and NHEJ1/XLF. Additional component of the NHEJ complex includes PAXX. Following autophosphorylation, PRKDC dissociates from DNA, leading to formation of the short-range NHEJ complex, composed of LIG4, XRCC4, XRCC6/Ku70, XRCC5/Ku86 and NHEJ1/XLF. The XRCC5-XRCC6 dimer also associates with NAA15, and this complex displays DNA binding activity towards the osteocalcin FGF response element (OCFRE). In addition, XRCC5 binds to the osteoblast-specific transcription factors MSX2 and RUNX2. Interacts with ELF3. Interacts with APLF (via KBM motif). The XRCC5/XRCC6 dimer associates in a DNA-dependent manner with APEX1. Identified in a complex with DEAF1 and XRCC6. Interacts with NR4A3; the DNA-dependent protein kinase complex DNA-PK phosphorylates and activates NR4A3 and prevents NR4A3 ubiquitinylation and degradation. Interacts with RNF138. Interacts with CYREN (via KBM motif). Interacts with WRN (via KBM motif). Interacts (via N-terminus) with HSF1 (via N-terminus); this interaction is direct and prevents XRCC5/XRCC6 heterodimeric binding and non-homologous end joining (NHEJ) repair activities induced by ionizing radiation (IR). Interacts with DHX9; this interaction occurs in a RNA-dependent manner. Part of the HDP-RNP complex composed of at least HEXIM1, PRKDC, XRCC5, XRCC6, paraspeckle proteins (SFPQ, NONO, PSPC1, RBM14, and MATR3) and NEAT1 RNA. Interacts with ERCC6. Interacts with ATF7. The XRCC5-XRCC6 dimer associates with ALKBH2. Interacts with TPRN; TPRN interacts with a number of DNA damage response proteins, is recruited to sites of DNA damage and may play a role in DNA damage repair. Interacts with ERCC6L2. Post-translationally, ADP-ribosylated by PARP3. Phosphorylated on serine residues. Phosphorylation by PRKDC may enhance helicase activity. In terms of processing, sumoylated. Post-translationally, ubiquitinated by RNF8 via 'Lys-48'-linked ubiquitination following DNA damage, leading to its degradation and removal from DNA damage sites. Ubiquitinated by RNF138, leading to remove the Ku complex from DNA breaks.

It is found in the nucleus. The protein localises to the nucleolus. It localises to the chromosome. Single-stranded DNA-dependent ATP-dependent helicase that plays a key role in DNA non-homologous end joining (NHEJ) by recruiting DNA-PK to DNA. Required for double-strand break repair and V(D)J recombination. Also has a role in chromosome translocation. The DNA helicase II complex binds preferentially to fork-like ends of double-stranded DNA in a cell cycle-dependent manner. It works in the 3'-5' direction. During NHEJ, the XRCC5-XRRC6 dimer performs the recognition step: it recognizes and binds to the broken ends of the DNA and protects them from further resection. Binding to DNA may be mediated by XRCC6. The XRCC5-XRRC6 dimer acts as a regulatory subunit of the DNA-dependent protein kinase complex DNA-PK by increasing the affinity of the catalytic subunit PRKDC to DNA by 100-fold. The XRCC5-XRRC6 dimer is probably involved in stabilizing broken DNA ends and bringing them together. The assembly of the DNA-PK complex to DNA ends is required for the NHEJ ligation step. The XRCC5-XRRC6 dimer probably also acts as a 5'-deoxyribose-5-phosphate lyase (5'-dRP lyase), by catalyzing the beta-elimination of the 5' deoxyribose-5-phosphate at an abasic site near double-strand breaks. XRCC5 probably acts as the catalytic subunit of 5'-dRP activity, and allows to 'clean' the termini of abasic sites, a class of nucleotide damage commonly associated with strand breaks, before such broken ends can be joined. The XRCC5-XRRC6 dimer together with APEX1 acts as a negative regulator of transcription. In association with NAA15, the XRCC5-XRRC6 dimer binds to the osteocalcin promoter and activates osteocalcin expression. As part of the DNA-PK complex, involved in the early steps of ribosome assembly by promoting the processing of precursor rRNA into mature 18S rRNA in the small-subunit processome. Binding to U3 small nucleolar RNA, recruits PRKDC and XRCC5/Ku86 to the small-subunit processome. Plays a role in the regulation of DNA virus-mediated innate immune response by assembling into the HDP-RNP complex, a complex that serves as a platform for IRF3 phosphorylation and subsequent innate immune response activation through the cGAS-STING pathway. This Mus musculus (Mouse) protein is X-ray repair cross-complementing protein 5 (Xrcc5).